Here is a 634-residue protein sequence, read N- to C-terminus: MDCEGTEDEGAGCNGWFFVEAIVEKKTGDNVSDDEDENADDTGSDLINFIDSETSICSQAEQETARALFQAQELQANKEAVHQLKRKFLVSPRSSPLGDITNQNNTHSHSQANESQVKRRLLDSYPDSGYGNTQVETVEATLQVDGQHGGSQNSVCSSGGGSVMDVETTESCANVELNSICEVLKSSNAKATLMAKFKELYGISYNELVRVFKSDKTCCIDWVCALFGVSPMVAENLKTLIKPFCMYYHIQCLSCDWGTIVLMLIRFSCAKNRTTIAKCLSTLVNIPQSQMFIEPPKLRSTPVALYFYRTGISNISNTYGETPEWITRQTQLQHSFEDSTFELSQMVQWAFDHEVLDDSEIAFHYAQLADIDSNAAAFLKSNCQAKYVKDCGTMARHYKRAQRKSLSMSAWIRYRCDRAKDGGNWREIAKFLRYQGVNFMSFIQMFKQFLKGTPKHNCIVIYGPPNTGKSLFAMSLMKFMQGSIISYVNSGSHFWLQPLEDAKIALLDDATYGCWTYIDQYLRNFLDGNPCSIDRKHRSLIQLVCPPLLITSNINPQEDANLMYLHTRVTVLKFLNTFPFDNNGNAVYTLNDENWKNFFSTTWSRLDLEEEEDKENGDPMPPFKCVPGENTRLL.

Positions 85 to 87 (KRK) match the Nuclear localization signal motif. Phosphoserine; by host is present on residues serine 91 and serine 95. Residues 92 to 117 (PRSSPLGDITNQNNTHSHSQANESQV) form a disordered region. Residues 100 to 115 (ITNQNNTHSHSQANES) show a composition bias toward polar residues. Positions 172 to 338 (CANVELNSIC…QTQLQHSFED (167 aa)) are DNA-binding region. The SF3 helicase domain maps to 437-587 (VNFMSFIQMF…FPFDNNGNAV (151 aa)). An ATP-binding site is contributed by 463-470 (GPPNTGKS).

Belongs to the papillomaviridae E1 protein family. Can form hexamers. Interacts with E2 protein; this interaction increases E1 DNA binding specificity. Interacts with host DNA polymerase subunit POLA2. Interacts with host single stranded DNA-binding protein RPA1. Interacts with host TOP1; this interaction stimulates the enzymatic activity of TOP1. In terms of processing, phosphorylated.

The protein localises to the host nucleus. It catalyses the reaction Couples ATP hydrolysis with the unwinding of duplex DNA by translocating in the 3'-5' direction.. It carries out the reaction ATP + H2O = ADP + phosphate + H(+). In terms of biological role, ATP-dependent DNA 3'-5' helicase required for initiation of viral DNA replication. It forms a complex with the viral E2 protein. The E1-E2 complex binds to the replication origin which contains binding sites for both proteins. During the initial step, a dimer of E1 interacts with a dimer of protein E2 leading to a complex that binds the viral origin of replication with high specificity. Then, a second dimer of E1 displaces the E2 dimer in an ATP-dependent manner to form the E1 tetramer. Following this, two E1 monomers are added to each half of the site, which results in the formation of two E1 trimers on the viral ori. Subsequently, two hexamers will be created. The double hexamer acts as a bi-directional helicase machinery and unwinds the viral DNA and then recruits the host DNA polymerase to start replication. This Homo sapiens (Human) protein is Replication protein E1.